The following is a 301-amino-acid chain: 4-hydroxy-tetrahydrodipicolinate synthase (301 aa).

T46 is a binding site for pyruvate. The Proton donor/acceptor role is filled by Y134. The active-site Schiff-base intermediate with substrate is K162. I203 provides a ligand contact to pyruvate.

It belongs to the DapA family. As to quaternary structure, homotetramer; dimer of dimers.

It localises to the cytoplasm. The catalysed reaction is L-aspartate 4-semialdehyde + pyruvate = (2S,4S)-4-hydroxy-2,3,4,5-tetrahydrodipicolinate + H2O + H(+). Its pathway is amino-acid biosynthesis; L-lysine biosynthesis via DAP pathway; (S)-tetrahydrodipicolinate from L-aspartate: step 3/4. In terms of biological role, catalyzes the condensation of (S)-aspartate-beta-semialdehyde [(S)-ASA] and pyruvate to 4-hydroxy-tetrahydrodipicolinate (HTPA). This chain is 4-hydroxy-tetrahydrodipicolinate synthase, found in Anaplasma marginale (strain St. Maries).